Reading from the N-terminus, the 172-residue chain is Protein GrpE (172 aa).

The disordered stretch occupies residues 1–23 (MNQDHPECDSEELTQNSPETDPL).

This sequence belongs to the GrpE family. In terms of assembly, homodimer.

It localises to the cytoplasm. Functionally, participates actively in the response to hyperosmotic and heat shock by preventing the aggregation of stress-denatured proteins, in association with DnaK and GrpE. It is the nucleotide exchange factor for DnaK and may function as a thermosensor. Unfolded proteins bind initially to DnaJ; upon interaction with the DnaJ-bound protein, DnaK hydrolyzes its bound ATP, resulting in the formation of a stable complex. GrpE releases ADP from DnaK; ATP binding to DnaK triggers the release of the substrate protein, thus completing the reaction cycle. Several rounds of ATP-dependent interactions between DnaJ, DnaK and GrpE are required for fully efficient folding. The sequence is that of Protein GrpE from Xylella fastidiosa (strain 9a5c).